The chain runs to 673 residues: Armadillo repeat-containing protein 8 (673 aa).

Alanine 2 is subject to N-acetylalanine. ARM repeat units follow at residues 51 to 92 (NKQK…SLAM), 95 to 134 (ENNVKSLLDCHIIPALLQGLLSPDLKFIEACLRCPRTIFT), 138 to 176 (TPEELLYTDATVIPHLMALLSRSRYTQEYICQIFSHCCK), 178 to 217 (PDHQTILFNHGAVQNIAHLLTSLSYKVRMQALKCFSVLAF), 224 to 265 (MTLV…YMCR), 269 to 309 (IRTD…YLIE), 313 to 352 (ELQRIASITDHLIAMLADYFKYPSSVSAITDIKRLDHDLK), 374 to 413 (DIRKKIIETENMMDRIVTGLSESSVKVRLAAVRCLHSLSR), 416 to 455 (QQLRTSFQDHAVWKPLMKVLQNAPDEILVVASSMLCNLLL), 458 to 497 (SPSKEPILESGAVELLCGLTQSENPALRVNGIWALMNTAF), 501 to 540 (QKIKADILRSLSTEQLFRLLSDSDLNVLMKTLGLLRNLLS), 543 to 585 (PHID…NIAD), 588 to 627 (TAKDLIMTNDDILQKIKYYMGHSHVKLQLAAMFCISNLIW), and 634 to 673 (QERQDKLRDMGIVDILHKLSQSPDSNLCDKAKMALQQYLA). At serine 337 the chain carries Phosphoserine. Serine 512 is subject to Phosphoserine.

In terms of assembly, identified in the CTLH complex that contains GID4, RANBP9 and/or RANBP10, MKLN1, MAEA, RMND5A (or alternatively its paralog RMND5B), GID8, ARMC8, WDR26 and YPEL5. Within this complex, MAEA, RMND5A (or alternatively its paralog RMND5B), GID8, WDR26, and RANBP9 and/or RANBP10 form the catalytic core, while GID4, MKLN1, ARMC8 and YPEL5 have ancillary roles.

It is found in the nucleus. Its subcellular location is the cytoplasm. Functionally, component of the CTLH E3 ubiquitin-protein ligase complex that selectively accepts ubiquitin from UBE2H and mediates ubiquitination and subsequent proteasomal degradation of the transcription factor HBP1. This is Armadillo repeat-containing protein 8 (ARMC8) from Pongo abelii (Sumatran orangutan).